The chain runs to 226 residues: Charged multivesicular body protein 5 (226 aa).

The stretch at 21-93 (IAGVDARATN…NQSFNMEQAN (73 aa)) forms a coiled coil. The span at 188–198 (KAPEAPSREPG) shows a compositional bias: basic and acidic residues. The disordered stretch occupies residues 188–226 (KAPEAPSREPGADSIVPGKSTIETDEFGLPKIPTSLKTT). Phosphoserine is present on Ser-201. Phosphothreonine is present on Thr-226.

It belongs to the SNF7 family. In terms of assembly, probable peripherally associated component of the endosomal sorting required for transport complex III (ESCRT-III).

The protein localises to the endosome membrane. Functionally, probable peripherally associated component of the endosomal sorting required for transport complex III (ESCRT-III) which is involved in multivesicular bodies (MVBs) formation and sorting of endosomal cargo proteins into MVBs. MVBs contain intraluminal vesicles (ILVs) that are generated by invagination and scission from the limiting membrane of the endosome and are delivered to lysosomes enabling degradation of membrane proteins. Specifically down-regulates Notch signaling activity in the germarium, probably by facilitating Notch endocytosis. The chain is Charged multivesicular body protein 5 from Drosophila melanogaster (Fruit fly).